The sequence spans 312 residues: tRNA-dihydrouridine(16) synthase (312 aa).

Residues 7–9 and Q68 contribute to the FMN site; that span reads PME. Catalysis depends on C98, which acts as the Proton donor. FMN contacts are provided by residues K139, 200 to 202, and 224 to 225; these read NGE and GR.

It belongs to the Dus family. DusC subfamily. FMN serves as cofactor.

The enzyme catalyses 5,6-dihydrouridine(16) in tRNA + NADP(+) = uridine(16) in tRNA + NADPH + H(+). It catalyses the reaction 5,6-dihydrouridine(16) in tRNA + NAD(+) = uridine(16) in tRNA + NADH + H(+). Its function is as follows. Catalyzes the synthesis of 5,6-dihydrouridine (D), a modified base found in the D-loop of most tRNAs, via the reduction of the C5-C6 double bond in target uridines. Specifically modifies U16 in tRNAs. The polypeptide is tRNA-dihydrouridine(16) synthase (Salmonella typhimurium (strain LT2 / SGSC1412 / ATCC 700720)).